The primary structure comprises 73 residues: Plasticin-A1 (73 aa).

The N-terminal stretch at 1 to 22 (MAFLKKSLFLVLFLAIVPLSIC) is a signal peptide. Residues 23 to 42 (EEEKREEENEEKQEDDDQSE) constitute a propeptide that is removed on maturation. Residues 25-45 (EKREEENEEKQEDDDQSEKRG) are disordered. Over residues 30 to 40 (ENEEKQEDDDQ) the composition is skewed to acidic residues. Glycine 70 bears the Glycine amide mark. The propeptide occupies 72 to 73 (ES).

The protein belongs to the frog skin active peptide (FSAP) family. Plasticin subfamily. As to expression, expressed by the skin glands.

It is found in the secreted. Its subcellular location is the target cell membrane. Functionally, peptide with no antimicrobial activity. May act in synergy with cationic peptides by enhancing their activity. Has a moderate hemolytic activity. This is Plasticin-A1 from Agalychnis annae (Blue-sided leaf frog).